We begin with the raw amino-acid sequence, 245 residues long: tRNA pseudouridine synthase A (245 aa).

The active-site Nucleophile is aspartate 52. Substrate is bound at residue tyrosine 111.

The protein belongs to the tRNA pseudouridine synthase TruA family. Homodimer.

It catalyses the reaction uridine(38/39/40) in tRNA = pseudouridine(38/39/40) in tRNA. In terms of biological role, formation of pseudouridine at positions 38, 39 and 40 in the anticodon stem and loop of transfer RNAs. This Wolbachia pipientis wMel protein is tRNA pseudouridine synthase A.